The primary structure comprises 467 residues: Uronate isomerase (467 aa).

Belongs to the metallo-dependent hydrolases superfamily. Uronate isomerase family.

It carries out the reaction D-glucuronate = D-fructuronate. It catalyses the reaction aldehydo-D-galacturonate = keto-D-tagaturonate. Its pathway is carbohydrate metabolism; pentose and glucuronate interconversion. This Staphylococcus haemolyticus (strain JCSC1435) protein is Uronate isomerase.